The primary structure comprises 330 residues: Aspartate--ammonia ligase (330 aa).

The protein belongs to the class-II aminoacyl-tRNA synthetase family. AsnA subfamily.

It localises to the cytoplasm. The enzyme catalyses L-aspartate + NH4(+) + ATP = L-asparagine + AMP + diphosphate + H(+). It participates in amino-acid biosynthesis; L-asparagine biosynthesis; L-asparagine from L-aspartate (ammonia route): step 1/1. This Salmonella paratyphi A (strain ATCC 9150 / SARB42) protein is Aspartate--ammonia ligase.